The following is a 372-amino-acid chain: 3-dehydroquinate synthase (372 aa).

NAD(+) is bound by residues 116–120 (GVVGD), 140–141 (TT), K153, K162, and 180–183 (TLNT). The Zn(2+) site is built by E195, H260, and H277.

It belongs to the sugar phosphate cyclases superfamily. Dehydroquinate synthase family. Requires Co(2+) as cofactor. Zn(2+) serves as cofactor. The cofactor is NAD(+).

The protein localises to the cytoplasm. It carries out the reaction 7-phospho-2-dehydro-3-deoxy-D-arabino-heptonate = 3-dehydroquinate + phosphate. It participates in metabolic intermediate biosynthesis; chorismate biosynthesis; chorismate from D-erythrose 4-phosphate and phosphoenolpyruvate: step 2/7. Functionally, catalyzes the conversion of 3-deoxy-D-arabino-heptulosonate 7-phosphate (DAHP) to dehydroquinate (DHQ). The sequence is that of 3-dehydroquinate synthase from Prochlorococcus marinus (strain MIT 9303).